Reading from the N-terminus, the 215-residue chain is Deoxyribose-phosphate aldolase (215 aa).

The active-site Proton donor/acceptor is the aspartate 89. The Schiff-base intermediate with acetaldehyde role is filled by lysine 153. Residue lysine 182 is the Proton donor/acceptor of the active site.

It belongs to the DeoC/FbaB aldolase family. DeoC type 1 subfamily.

It localises to the cytoplasm. It carries out the reaction 2-deoxy-D-ribose 5-phosphate = D-glyceraldehyde 3-phosphate + acetaldehyde. Its pathway is carbohydrate degradation; 2-deoxy-D-ribose 1-phosphate degradation; D-glyceraldehyde 3-phosphate and acetaldehyde from 2-deoxy-alpha-D-ribose 1-phosphate: step 2/2. Functionally, catalyzes a reversible aldol reaction between acetaldehyde and D-glyceraldehyde 3-phosphate to generate 2-deoxy-D-ribose 5-phosphate. This Lactiplantibacillus plantarum (strain ATCC BAA-793 / NCIMB 8826 / WCFS1) (Lactobacillus plantarum) protein is Deoxyribose-phosphate aldolase.